The primary structure comprises 538 residues: Atos homolog protein B (538 aa).

A compositionally biased stretch (low complexity) spans 1–18; sequence MRHVQAEPSPSSEPEAGP. Disordered regions lie at residues 1–114 and 133–300; these read MRHV…LGVA and TSSW…VLDP. Pro residues predominate over residues 227–238; it reads HTPPGPGPPGPC. 2 positions are modified to phosphoserine: Ser-254 and Ser-255. A required for macropage invasion region spans residues 348–430; that stretch reads LLGNFEESLL…VPKVGTVQVT (83 aa). The segment at 436–444 is transactivation domain 1 (TAD1); it reads QTVVKMFLV.

Belongs to the ATOS family.

Its subcellular location is the nucleus. Transcription regulator that may syncronize transcriptional and translational programs. In Homo sapiens (Human), this protein is Atos homolog protein B.